The chain runs to 511 residues: Glutamate/gamma-aminobutyrate antiporter (511 aa).

The Cytoplasmic segment spans residues 1 to 14; sequence MATLVQTGKAKQLT. Residues 15–35 traverse the membrane as a helical segment; the sequence is LLGFFAITASMVMAVYEYPTF. Residues 36 to 41 lie on the Periplasmic side of the membrane; that stretch reads ATSGFS. The helical transmembrane segment at 42-62 threads the bilayer; that stretch reads LVFFLLLGGILWFIPVGLCAA. Over 63–93 the chain is Cytoplasmic; sequence EMATVDGWEEGGVFAWVSNTLGPRWGFAAIS. A helical membrane pass occupies residues 94 to 114; it reads FGYLQIAIGFIPMLYFVLGAL. Residues 115–127 lie on the Periplasmic side of the membrane; that stretch reads SYILKWPALNEDP. The helical transmembrane segment at 128–148 threads the bilayer; the sequence is ITKTIAALIILWALALTQFGG. Residues 149 to 157 are Cytoplasmic-facing; it reads TKYTARIAK. The helical transmembrane segment at 158–178 threads the bilayer; that stretch reads VGFFAGILLPAFILIALAAIY. At 179–200 the chain is on the periplasmic side; sequence LHSGAPVAIEMDSKTFFPDFSK. The helical transmembrane segment at 201–221 threads the bilayer; that stretch reads VGTLVVFVAFILSYMGVEASA. At 222–239 the chain is on the cytoplasmic side; sequence THVNEMSNPGRDYPLAML. The helical transmembrane segment at 240–260 threads the bilayer; that stretch reads LLMVAAICLSSVGGLSIAMVI. Topologically, residues 261–291 are periplasmic; sequence PGNEINLSAGVMQTFTVLMSHVAPEIEWTVR. A helical transmembrane segment spans residues 292–312; it reads VISALLLLGVLAEIASWIVGP. The Cytoplasmic segment spans residues 313–335; that stretch reads SRGMYVTAQKNLLPAAFAKMNKN. A helical membrane pass occupies residues 336–356; it reads GVPVTLVISQLVITSIALIIL. At 357–366 the chain is on the periplasmic side; sequence TNTGGGNNMS. A helical membrane pass occupies residues 367-387; sequence FLIALALTVVIYLCAYFMLFI. Over 388-412 the chain is Cytoplasmic; that stretch reads GYIVLVLKHPDLKRTFNIPGGKGVK. A helical membrane pass occupies residues 413–433; it reads LVVAIVGLLTSIMAFIVSFLP. The Periplasmic portion of the chain corresponds to 434 to 445; that stretch reads PDNIQGDSTDMY. Residues 446–466 traverse the membrane as a helical segment; that stretch reads VELLVVSFLVVLALPFILYAV. Residues 467–511 lie on the Cytoplasmic side of the membrane; that stretch reads HDRKGKANTGVTLEPINSQNAPKGHFFLHPRARSPHYIVMNDKKH.

This sequence belongs to the amino acid-polyamine-organocation (APC) superfamily. Glutamate:GABA antiporter (GGA) (TC 2.A.3.7) family.

Its subcellular location is the cell inner membrane. The catalysed reaction is 4-aminobutanoate(in) + L-glutamate(out) = 4-aminobutanoate(out) + L-glutamate(in). Shows pH-dependent activity. The glutamate analog L-trans-pyrrolidine-2,4-dicarboxylic acid (L-PDC) blocks the uptake of glutamate by selective inhibition. Involved in glutaminase-dependent acid resistance. Exchanges extracellular glutamate (Glu) for intracellular gamma-aminobutyric acid (GABA) under acidic conditions. The ability to survive the extremely acidic conditions of the stomach is essential for successful colonization of the host by commensal and pathogenic bacteria. In Escherichia coli O157:H7, this protein is Glutamate/gamma-aminobutyrate antiporter (gadC).